We begin with the raw amino-acid sequence, 464 residues long: MYSNVIGTVTSGKRKVYLLSLLLIGFWDCVTCHGSPVDICTAKPRDIPMNPMCIYRSPEKKATEDEGSEQKIPEATNRRVWELSKANSRFATTFYQHLADSKNDNDNIFLSPLSISTAFAMTKLGACNDTLQQLMEVFKFDTISEKTSDQIHFFFAKLNCRLYRKANKSSKLVSANRLFGDKSLTFNETYQDISELVYGAKLQPLDFKENAEQSRAAINKWVSNKTEGRITDVIPSEAINELTVLVLVNTIYFKGLWKSKFSPENTRKELFYKADGESCSASMMYQEGKFRYRRVAEGTQVLELPFKGDDITMVLILPKPEKSLAKVEKELTPEVLQEWLDELEEMMLVVHMPRFRIEDGFSLKEQLQDMGLVDLFSPEKSKLPGIVAEGRDDLYVSDAFHKAFLEVNEEGSEAAASTAVVIAGRSLNPNRVTFKANRPFLVFIREVPLNTIIFMGRVANPCVK.

Positions 1 to 32 (MYSNVIGTVTSGKRKVYLLSLLLIGFWDCVTC) are cleaved as a signal peptide. Disulfide bonds link Cys-40–Cys-160 and Cys-53–Cys-127. Thr-63 is modified (phosphothreonine; by FAM20C). Position 68 is a phosphoserine; by FAM20C (Ser-68). Trp-81 provides a ligand contact to heparin. N-linked (GlcNAc...) asparagine glycosylation is present at Asn-128. Residue Arg-161 participates in heparin binding. N-linked (GlcNAc...) asparagine glycosylation occurs at Asn-167. A heparin-binding site is contributed by Arg-177. Asn-187 is a glycosylation site (N-linked (GlcNAc...) (complex) asparagine). The N-linked (GlcNAc...) asparagine glycan is linked to Asn-224. Cys-279 and Cys-462 form a disulfide bridge.

The protein belongs to the serpin family. In terms of assembly, forms protease inhibiting heterodimer with TMPRSS7. Post-translationally, phosphorylated by FAM20C in the extracellular medium. In terms of tissue distribution, found in plasma.

The protein resides in the secreted. It localises to the extracellular space. Functionally, most important serine protease inhibitor in plasma that regulates the blood coagulation cascade. AT-III inhibits thrombin, matriptase-3/TMPRSS7, as well as factors IXa, Xa and XIa. Its inhibitory activity is greatly enhanced in the presence of heparin. This is Antithrombin-III (SERPINC1) from Homo sapiens (Human).